Consider the following 202-residue polypeptide: Probable nicotinate-nucleotide adenylyltransferase (202 aa).

It belongs to the NadD family.

It carries out the reaction nicotinate beta-D-ribonucleotide + ATP + H(+) = deamido-NAD(+) + diphosphate. It participates in cofactor biosynthesis; NAD(+) biosynthesis; deamido-NAD(+) from nicotinate D-ribonucleotide: step 1/1. In terms of biological role, catalyzes the reversible adenylation of nicotinate mononucleotide (NaMN) to nicotinic acid adenine dinucleotide (NaAD). In Clostridium perfringens (strain SM101 / Type A), this protein is Probable nicotinate-nucleotide adenylyltransferase.